A 103-amino-acid polypeptide reads, in one-letter code: Large ribosomal subunit protein uL22c (103 aa).

The protein belongs to the universal ribosomal protein uL22 family. In terms of assembly, part of the 50S ribosomal subunit.

Its subcellular location is the plastid. It localises to the chloroplast. Functionally, this protein binds specifically to 23S rRNA. The globular domain of the protein is located near the polypeptide exit tunnel on the outside of the subunit, while an extended beta-hairpin is found that lines the wall of the exit tunnel in the center of the 70S ribosome. The polypeptide is Large ribosomal subunit protein uL22c (rpl22) (Cyanidium caldarium (Red alga)).